Consider the following 168-residue polypeptide: Acetolactate synthase small subunit (168 aa).

Residues 7–82 (TLSVLVEDKP…VIKIVEQDDE (76 aa)) form the ACT domain.

Belongs to the acetolactate synthase small subunit family. As to quaternary structure, dimer of large and small chains.

The catalysed reaction is 2 pyruvate + H(+) = (2S)-2-acetolactate + CO2. Its pathway is amino-acid biosynthesis; L-isoleucine biosynthesis; L-isoleucine from 2-oxobutanoate: step 1/4. The protein operates within amino-acid biosynthesis; L-valine biosynthesis; L-valine from pyruvate: step 1/4. In Mycobacterium bovis (strain ATCC BAA-935 / AF2122/97), this protein is Acetolactate synthase small subunit (ilvH).